The primary structure comprises 237 residues: tRNA (guanine-N(7)-)-methyltransferase (237 aa).

S-adenosyl-L-methionine contacts are provided by glutamate 65, glutamate 90, aspartate 117, and aspartate 140. Aspartate 140 is a catalytic residue. Substrate is bound by residues lysine 144, aspartate 176, and 212-215; that span reads TKFE. The tract at residues 197 to 217 is disordered; the sequence is TCGPRQFSPRGERPETKFERR. Positions 206–217 are enriched in basic and acidic residues; the sequence is RGERPETKFERR.

It belongs to the class I-like SAM-binding methyltransferase superfamily. TrmB family.

It carries out the reaction guanosine(46) in tRNA + S-adenosyl-L-methionine = N(7)-methylguanosine(46) in tRNA + S-adenosyl-L-homocysteine. The protein operates within tRNA modification; N(7)-methylguanine-tRNA biosynthesis. Catalyzes the formation of N(7)-methylguanine at position 46 (m7G46) in tRNA. This is tRNA (guanine-N(7)-)-methyltransferase from Alkalilimnicola ehrlichii (strain ATCC BAA-1101 / DSM 17681 / MLHE-1).